Reading from the N-terminus, the 452-residue chain is UDP-N-acetylmuramoylalanine--D-glutamate ligase (452 aa).

115–121 (GTNGKTT) serves as a coordination point for ATP.

The protein belongs to the MurCDEF family.

The protein resides in the cytoplasm. The catalysed reaction is UDP-N-acetyl-alpha-D-muramoyl-L-alanine + D-glutamate + ATP = UDP-N-acetyl-alpha-D-muramoyl-L-alanyl-D-glutamate + ADP + phosphate + H(+). Its pathway is cell wall biogenesis; peptidoglycan biosynthesis. In terms of biological role, cell wall formation. Catalyzes the addition of glutamate to the nucleotide precursor UDP-N-acetylmuramoyl-L-alanine (UMA). The sequence is that of UDP-N-acetylmuramoylalanine--D-glutamate ligase from Geobacter sp. (strain M21).